The sequence spans 863 residues: Autotaxin (863 aa).

Positions 1 to 27 (MARRSSFQSCQIISLFTFAVGVNICLG) are cleaved as a signal peptide. The propeptide at 28 to 35 (FTAHRIKR) is removed by furin. Asn-54 carries an N-linked (GlcNAc...) asparagine glycan. 2 consecutive SMB domains span residues 55–98 (ISGS…LKTA) and 99–143 (RGWE…GESH). Disulfide bonds link Cys-59–Cys-76, Cys-63–Cys-94, Cys-74–Cys-87, Cys-80–Cys-86, Cys-103–Cys-120, Cys-108–Cys-138, Cys-118–Cys-131, Cys-124–Cys-130, Cys-149–Cys-195, and Cys-157–Cys-351. Residues 127 to 129 (RGD) carry the Cell attachment site motif. Residues 145–502 (VDDDCEEIKA…STFKYKTKVP (358 aa)) form a phosphodiesterase region. Zn(2+) is bound by residues Asp-172 and Thr-210. Thr-210 serves as the catalytic Nucleophile. Positions 210, 231, and 312 each coordinate 1-(9Z-octadecenoyl)-sn-glycero-3-phosphate. Residues Thr-210, Asn-231, and Asp-312 each contribute to the 1-hexadecanoyl-sn-glycero-3-phosphate site. 1-tetradecanoyl-sn-glycerol 3-phosphate is bound by residues Thr-210, Asn-231, and Asp-312. Zn(2+) is bound by residues Asp-312, His-316, Asp-359, and His-360. Disulfide bonds link Cys-367–Cys-469, Cys-414–Cys-806, Cys-567–Cys-667, Cys-569–Cys-652, and Cys-775–Cys-785. N-linked (GlcNAc...) asparagine glycosylation is present at Asn-411. His-475 lines the Zn(2+) pocket. A 1-(9Z-octadecenoyl)-sn-glycero-3-phosphate-binding site is contributed by His-475. His-475 provides a ligand contact to 1-hexadecanoyl-sn-glycero-3-phosphate. His-475 contacts 1-tetradecanoyl-sn-glycerol 3-phosphate. Asn-525 carries N-linked (GlcNAc...) asparagine glycosylation. The interval 598–863 (LYGRPAVLYR…TYLHTYESEI (266 aa)) is nuclease-like domain. Ca(2+) is bound by residues Asp-740, Asp-742, Asp-744, Leu-746, and Asp-748. N-linked (GlcNAc...) asparagine glycosylation is present at Asn-807. The segment at 830–851 (IEHLTSLDFFRKTSRSYPEILT) is required for secretion.

The protein belongs to the nucleotide pyrophosphatase/phosphodiesterase family. Requires Zn(2+) as cofactor. Ca(2+) is required as a cofactor. N-glycosylation, but not furin-cleavage, plays a critical role on secretion and on lysoPLD activity. Post-translationally, the interdomain disulfide bond between Cys-414 and Cys-806 is essential for catalytic activity. In terms of tissue distribution, detected in blood plasma (at protein level). Predominantly expressed in brain, placenta, ovary, and small intestine. Expressed in a number of carcinomas such as hepatocellular and prostate carcinoma, neuroblastoma and non-small-cell lung cancer. Expressed in body fluids such as plasma, cerebral spinal fluid (CSF), saliva, follicular and amniotic fluids. Not detected in leukocytes. Isoform 1 is more highly expressed in peripheral tissues than in the central nervous system (CNS). Adipocytes only express isoform 1. Isoform 3 is more highly expressed in the brain than in peripheral tissues.

It localises to the secreted. It carries out the reaction a 1-O-alkyl-sn-glycero-3-phosphoethanolamine + H2O = a 1-O-alkyl-sn-glycero-3-phosphate + ethanolamine + H(+). The catalysed reaction is a 1-acyl-sn-glycero-3-phosphoethanolamine + H2O = a 1-acyl-sn-glycero-3-phosphate + ethanolamine + H(+). The enzyme catalyses 1-(9Z-octadecenoyl)-sn-glycero-3-phosphoethanolamine + H2O = 1-(9Z-octadecenoyl)-sn-glycero-3-phosphate + ethanolamine + H(+). It catalyses the reaction a 1-O-alkyl-sn-glycero-3-phosphocholine + H2O = a 1-O-alkyl-sn-glycero-3-phosphate + choline + H(+). It carries out the reaction 1-O-(9Z-octadecenyl)-sn-glycero-3-phosphocholine + H2O = 1-O-(9Z-octadecenyl)-sn-glycero-3-phosphate + choline + H(+). The catalysed reaction is 1-O-hexadecyl-sn-glycero-3-phosphocholine + H2O = 1-O-hexadecyl-sn-glycero-3-phosphate + choline + H(+). The enzyme catalyses a 1-O-(1Z-alkenyl)-sn-glycero-3-phosphocholine + H2O = a 1-O-(1Z-alkenyl)-sn-glycero-3-phosphate + choline + H(+). It catalyses the reaction a 1-acyl-sn-glycero-3-phosphocholine + H2O = a 1-acyl-sn-glycero-3-phosphate + choline + H(+). It carries out the reaction 1-dodecanoyl-sn-glycero-3-phosphocholine + H2O = 1-dodecanoyl-sn-glycerol 3-phosphate + choline + H(+). The catalysed reaction is 1-(9Z-octadecenoyl)-sn-glycero-3-phosphocholine + H2O = 1-(9Z-octadecenoyl)-sn-glycero-3-phosphate + choline + H(+). The enzyme catalyses 1-tetradecanoyl-sn-glycero-3-phosphocholine + H2O = 1-tetradecanoyl-sn-glycerol 3-phosphate + choline + H(+). It catalyses the reaction 1-decanoyl-sn-glycero-3-phosphocholine + H2O = 1-decanoyl-sn-glycero-3-phosphate + choline + H(+). It carries out the reaction 1-octadecanoyl-sn-glycero-3-phosphocholine + H2O = 1-octadecanoyl-sn-glycero-3-phosphate + choline + H(+). The catalysed reaction is 1-hexadecanoyl-sn-glycero-3-phosphocholine + H2O = 1-hexadecanoyl-sn-glycero-3-phosphate + choline + H(+). The enzyme catalyses 1-hexanoyl-sn-glycero-3-phosphocholine + H2O = 1-hexanoyl-sn-glycero-3-phosphate + choline + H(+). It catalyses the reaction 1-(9Z,12Z)-octadecadienoyl-sn-glycero-3-phosphocholine + H2O = 1-(9Z,12Z)-octadecadienoyl-sn-glycero-3-phosphate + choline + H(+). It carries out the reaction sphing-4-enine-phosphocholine + H2O = sphing-4-enine 1-phosphate + choline + H(+). The catalysed reaction is 1-(5Z,8Z,11Z,14Z-eicosatetraenoyl)-sn-glycero-3-phosphocholine + H2O = 1-(5Z,8Z,11Z,14Z-eicosatetraenoyl)-sn-glycero-3-phosphate + choline + H(+). The enzyme catalyses a 2-acyl-sn-glycero-3-phosphocholine + H2O = a 2-acyl-sn-glycerol 3-phosphate + choline + H(+). It catalyses the reaction a 1,2-diacyl-sn-glycero-3-phosphocholine + H2O = a 1,2-diacyl-sn-glycero-3-phosphate + choline + H(+). It carries out the reaction 1,2-dioctanoyl-sn-glycero-3-phosphocholine + H2O = 1,2-dioctanoyl-sn-glycero-3-phosphate + choline + H(+). The catalysed reaction is 1,2-didecanoyl-sn-glycero-3-phosphocholine + H2O = 1,2-didecanoyl-sn-glycero-3-phosphate + choline + H(+). The enzyme catalyses a 1-acyl-sn-glycero-3-phospho-L-serine + H2O = a 1-acyl-sn-glycero-3-phosphate + L-serine + H(+). It catalyses the reaction 1-(9Z-octadecenoyl)-sn-glycero-3-phospho-L-serine + H2O = 1-(9Z-octadecenoyl)-sn-glycero-3-phosphate + L-serine + H(+). It carries out the reaction a 2-acyl-sn-glycero-3-phospho-L-serine + H2O = a 2-acyl-sn-glycerol 3-phosphate + L-serine + H(+). Inhibited by lysophosphatidic acid (LPA) and sphingosine-1-phosphate (S1P). Inhibited by EDTA and EGTA. Its function is as follows. Secreted lysophospholipase D that hydrolyzes lysophospholipids to produce the signaling molecule lysophosphatidic acid (LPA) in extracellular fluids. Its major substrate is lysophosphatidylcholine. Can also act on sphingosylphosphorylcholine producing sphingosine-1-phosphate, a modulator of cell motility. Can hydrolyze, in vitro, bis-pNPP, to some extent pNP-TMP, and barely ATP. Involved in several motility-related processes such as angiogenesis and neurite outgrowth. Acts as an angiogenic factor by stimulating migration of smooth muscle cells and microtubule formation. Stimulates migration of melanoma cells, probably via a pertussis toxin-sensitive G protein. May have a role in induction of parturition. Possible involvement in cell proliferation and adipose tissue development. Required for LPA production in activated platelets, cleaves the sn-1 lysophospholipids to generate sn-1 lysophosphatidic acids containing predominantly 18:2 and 20:4 fatty acids. Shows a preference for the sn-1 to the sn-2 isomer of 1-O-alkyl-sn-glycero-3-phosphocholine (lyso-PAF). This chain is Autotaxin, found in Homo sapiens (Human).